The chain runs to 233 residues: Small ribosomal subunit protein uS2 (233 aa).

This sequence belongs to the universal ribosomal protein uS2 family.

This is Small ribosomal subunit protein uS2 from Bacillus cereus (strain G9842).